Here is a 399-residue protein sequence, read N- to C-terminus: Argininosuccinate synthase (399 aa).

8 to 16 (AYSGGLDTS) contacts ATP. Tyr-87 contributes to the L-citrulline binding site. An ATP-binding site is contributed by Gly-117. The L-aspartate site is built by Thr-119, Asn-123, and Asp-124. Asn-123 contributes to the L-citrulline binding site. Positions 127, 175, 260, and 272 each coordinate L-citrulline.

The protein belongs to the argininosuccinate synthase family. Type 1 subfamily. In terms of assembly, homotetramer.

Its subcellular location is the cytoplasm. The catalysed reaction is L-citrulline + L-aspartate + ATP = 2-(N(omega)-L-arginino)succinate + AMP + diphosphate + H(+). It participates in amino-acid biosynthesis; L-arginine biosynthesis; L-arginine from L-ornithine and carbamoyl phosphate: step 2/3. The chain is Argininosuccinate synthase from Rhodococcus erythropolis (strain PR4 / NBRC 100887).